Here is a 551-residue protein sequence, read N- to C-terminus: Interleukin-2 receptor subunit beta (551 aa).

An N-terminal signal peptide occupies residues Met-1–Ala-26. Residues Ala-27–Thr-240 are Extracellular-facing. N-linked (GlcNAc...) asparagine glycans are attached at residues Asn-29, Asn-43, and Asn-71. An intrachain disulfide couples Cys-36 to Cys-46. A disulfide bridge links Cys-74 with Cys-86. One can recognise a Fibronectin type-III domain in the interval Ala-134 to Ala-234. Asn-149 is a glycosylation site (N-linked (GlcNAc...) asparagine). Residues Trp-220–Ser-224 carry the WSXWS motif motif. A helical transmembrane segment spans residues Ile-241–Ile-265. Residues Asn-266–Val-551 lie on the Cytoplasmic side of the membrane. The short motif at Leu-278–Ser-286 is the Box 1 motif element. 3 disordered regions span residues Glu-389–Ala-417, Phe-430–Asp-484, and Ala-496–Pro-517.

This sequence belongs to the type I cytokine receptor family. Type 4 subfamily. Non-covalent dimer of an alpha and a beta subunit. IL2R exists in 3 different forms: a high affinity dimer, an intermediate affinity monomer (beta subunit), and a low affinity monomer (alpha subunit). The high and intermediate affinity forms also associate with a gamma subunit. Interacts with SHB upon interleukin stimulation.

Its subcellular location is the cell membrane. It is found in the cell surface. Receptor for interleukin-2. This beta subunit is involved in receptor mediated endocytosis and transduces the mitogenic signals of IL2. Probably in association with IL15RA, involved in the stimulation of neutrophil phagocytosis by IL15. This Macaca fascicularis (Crab-eating macaque) protein is Interleukin-2 receptor subunit beta (IL2RB).